We begin with the raw amino-acid sequence, 102 residues long: UPF0235 protein Noc_3000 (102 aa).

The protein belongs to the UPF0235 family.

The sequence is that of UPF0235 protein Noc_3000 from Nitrosococcus oceani (strain ATCC 19707 / BCRC 17464 / JCM 30415 / NCIMB 11848 / C-107).